The sequence spans 569 residues: Carotenoid cleavage dioxygenase 8 homolog B, chloroplastic (569 aa).

A chloroplast-targeting transit peptide spans 1-43 (MSPAMLQASSLCVSAALSGAASRPGRLASQGHQGKRAVAQPLA). The interval 23-81 (RPGRLASQGHQGKRAVAQPLAASAVTEAAPPAPVVAPPARPVDAPRRRGGRGGGGGGGE) is disordered. Positions 52–62 (PPAPVVAPPAR) are enriched in pro residues. Residues histidine 251, histidine 301, histidine 368, and histidine 558 each coordinate Fe cation.

It belongs to the carotenoid oxygenase family. It depends on Fe(2+) as a cofactor. In terms of tissue distribution, expressed in parenchyma cells of the root stele, shoot apex, leaf buds, xylem parenchyma cells of the stem, inflorescences and panicles.

The protein resides in the plastid. Its subcellular location is the chloroplast. The catalysed reaction is 9-cis-10'-apo-beta-carotenal + 2 O2 = (2E,4E,6E)-7-hydroxy-4-methylhepta-2,4,6-trienal + (11R)-carlactone. It carries out the reaction all-trans-10'-apo-beta-carotenal + O2 = (2E,4E,6E)-4-methylocta-2,4,6-trienedial + 13-apo-beta-carotenone. Its function is as follows. Involved in strigolactones biosynthesis by cleaving the C(27) 9-cis-10'-apo-beta-carotenal produced by CCD7. Produces the C(19) carlactone and a C(8) hydroxyaldehyde. Also shows lower activity with all-trans-10'-apo-beta-carotenal producing a C(9) dialdehyde and the C(18) 13-apo-beta-carotenone. Strigolactones are hormones that inhibit tillering and shoot branching through the MAX-dependent pathway, contribute to the regulation of shoot architectural response to phosphate-limiting conditions and function as rhizosphere signal that stimulates hyphal branching of arbuscular mycorrhizal fungi and trigger seed germination of root parasitic weeds. The sequence is that of Carotenoid cleavage dioxygenase 8 homolog B, chloroplastic (CCD8B) from Oryza sativa subsp. japonica (Rice).